A 255-amino-acid polypeptide reads, in one-letter code: Uracil-DNA glycosylase (255 aa).

The disordered stretch occupies residues 1-20 (MFSASTTPEQPLGLSGDATP). Asp-99 (proton acceptor) is an active-site residue.

The protein belongs to the uracil-DNA glycosylase (UDG) superfamily. UNG family.

It is found in the host nucleus. It catalyses the reaction Hydrolyzes single-stranded DNA or mismatched double-stranded DNA and polynucleotides, releasing free uracil.. Its function is as follows. Excises uracil residues from the DNA which can arise as a result of misincorporation of dUMP residues by DNA polymerase or deamination of cytosines. Therefore may reduce deleterious uracil incorporation into the viral genome, particularly in terminally differentiated cells which lack DNA repair enzymes. This chain is Uracil-DNA glycosylase, found in Human herpesvirus 2 (strain HG52) (HHV-2).